Reading from the N-terminus, the 410-residue chain is MAKINDHYLKLKAGYLFPEIGRRVREFAAANPSAKVIRLGIGDVTRPLAPAVIKAFHEAVDDLATTENFAGYGPEQGYDWLINAIIEKSYKPLGVDLKTEEMFISDGSKCDCANILDIFALDNVVAIGDPVYPVYNDTNVMIGRTGEADDKGYYKGIVYMPCTEENGFIPSLPTEKVDIIYLCFPNNPTGTVATKAELKKWVDYAIANDAVIFFDAAYEAFITDPAIPHSIYEIEGAKKCAIEFRSFSKTAGFTGVRCGLVVVPEEVMGTTPTGEKYSFNKLWLRRTTTKFNGASYPVQKAAAAVYSDEGWQQNKEIIDYYMENARIIREGLAAAGLTVYGGVNAPYIWLKTPGGMSSWDFFDKLLNECNVVGTPGSGFGPSGEGFFRLSAFGHRENVIEAVERIKKNLK.

2 residues coordinate substrate: Y15 and G42. Pyridoxal 5'-phosphate-binding positions include Y72, 108-109 (SK), Y132, N187, Y218, and 246-248 (SFS). Substrate-binding residues include K109, Y132, and N187. An N6-(pyridoxal phosphate)lysine modification is found at K249. Residues R257 and N292 each coordinate pyridoxal 5'-phosphate. Residues N292 and R388 each coordinate substrate.

It belongs to the class-I pyridoxal-phosphate-dependent aminotransferase family. LL-diaminopimelate aminotransferase subfamily. In terms of assembly, homodimer. It depends on pyridoxal 5'-phosphate as a cofactor.

The catalysed reaction is (2S,6S)-2,6-diaminopimelate + 2-oxoglutarate = (S)-2,3,4,5-tetrahydrodipicolinate + L-glutamate + H2O + H(+). The protein operates within amino-acid biosynthesis; L-lysine biosynthesis via DAP pathway; LL-2,6-diaminopimelate from (S)-tetrahydrodipicolinate (aminotransferase route): step 1/1. Involved in the synthesis of meso-diaminopimelate (m-DAP or DL-DAP), required for both lysine and peptidoglycan biosynthesis. Catalyzes the direct conversion of tetrahydrodipicolinate to LL-diaminopimelate. This chain is LL-diaminopimelate aminotransferase, found in Geobacter sulfurreducens (strain ATCC 51573 / DSM 12127 / PCA).